Consider the following 256-residue polypeptide: DNA repair protein RecO (256 aa).

It belongs to the RecO family.

Functionally, involved in DNA repair and RecF pathway recombination. This is DNA repair protein RecO from Thiobacillus denitrificans (strain ATCC 25259 / T1).